The sequence spans 879 residues: Leucine--tRNA ligase (879 aa).

The short motif at 43–53 (PYPSGRIHMGH) is the 'HIGH' region element. The short motif at 636-640 (KMSKS) is the 'KMSKS' region element. Lysine 639 lines the ATP pocket.

Belongs to the class-I aminoacyl-tRNA synthetase family.

It is found in the cytoplasm. It catalyses the reaction tRNA(Leu) + L-leucine + ATP = L-leucyl-tRNA(Leu) + AMP + diphosphate. The chain is Leucine--tRNA ligase from Afipia carboxidovorans (strain ATCC 49405 / DSM 1227 / KCTC 32145 / OM5) (Oligotropha carboxidovorans).